The primary structure comprises 505 residues: Flagellin (505 aa).

This sequence belongs to the bacterial flagellin family.

It localises to the secreted. The protein resides in the bacterial flagellum. Flagellin is the subunit protein which polymerizes to form the filaments of bacterial flagella. The sequence is that of Flagellin (fliC) from Salmonella dublin.